A 138-amino-acid polypeptide reads, in one-letter code: Histone H2AX (138 aa).

Residues 1–23 (MSTTGKGGKAKGKTASSKQVSRS) are disordered. Position 2 is an N-acetylserine (Ser2). Residues Lys6, Lys9, Lys11, Lys13, and Lys18 each carry the N6-acetyllysine modification. A Phosphoserine modification is found at Ser123. A Glycyl lysine isopeptide (Lys-Gly) (interchain with G-Cter in ubiquitin) cross-link involves residue Lys124. Ser125, Ser130, and Ser135 each carry phosphoserine. Positions 135-136 (SQ) match the [ST]-Q motif motif.

Belongs to the histone H2A family. The nucleosome is a histone octamer containing two molecules each of H2A, H2B, H3 and H4 assembled in one H3-H4 heterotetramer and two H2A-H2B heterodimers. The octamer wraps approximately 147 bp of DNA. In terms of processing, monoubiquitination of Lys-124 gives a specific tag for epigenetic transcriptional repression. Acetylation occurs almost exclusively in the MAC.

It is found in the nucleus. Its subcellular location is the chromosome. Core component of nucleosome. Nucleosomes wrap and compact DNA into chromatin, limiting DNA accessibility to the cellular machineries which require DNA as a template. Histones thereby play a central role in transcription regulation, DNA repair, DNA replication and chromosomal stability. DNA accessibility is regulated via a complex set of post-translational modifications of histones, also called histone code, and nucleosome remodeling. This Tetrahymena pyriformis protein is Histone H2AX (HTA1).